Here is a 274-residue protein sequence, read N- to C-terminus: Hydroxyethylthiazole kinase (274 aa).

Met-54 is a binding site for substrate. Residues Arg-129 and Thr-175 each coordinate ATP. Gly-202 is a substrate binding site.

It belongs to the Thz kinase family. It depends on Mg(2+) as a cofactor.

It carries out the reaction 5-(2-hydroxyethyl)-4-methylthiazole + ATP = 4-methyl-5-(2-phosphooxyethyl)-thiazole + ADP + H(+). Its pathway is cofactor biosynthesis; thiamine diphosphate biosynthesis; 4-methyl-5-(2-phosphoethyl)-thiazole from 5-(2-hydroxyethyl)-4-methylthiazole: step 1/1. Functionally, catalyzes the phosphorylation of the hydroxyl group of 4-methyl-5-beta-hydroxyethylthiazole (THZ). The chain is Hydroxyethylthiazole kinase from Granulibacter bethesdensis (strain ATCC BAA-1260 / CGDNIH1).